The primary structure comprises 777 residues: NAD(P)H-quinone oxidoreductase subunit 5, chloroplastic (777 aa).

16 helical membrane passes run 9-29, 40-60, 89-109, 125-145, 147-167, 185-205, 220-240, 259-279, 290-312, 328-348, 355-375, 397-417, 426-446, 550-570, 604-624, and 731-751; these read WIIP…LLLF, WSFP…YLSI, IDPL…LVLF, FAYL…SNLI, IYIF…FWFT, GDFG…SFEF, NQVH…GAVA, TPIS…FLVA, YIMN…LALA, LGYM…FHLI, ALLF…VGYS, TAFL…CFWS, WLYS…TAFY, LFSL…GIPF, FVTN…IATF, and IFIF…FFVL.

The protein belongs to the complex I subunit 5 family. As to quaternary structure, NDH is composed of at least 16 different subunits, 5 of which are encoded in the nucleus.

The protein resides in the plastid. It is found in the chloroplast thylakoid membrane. The enzyme catalyses a plastoquinone + NADH + (n+1) H(+)(in) = a plastoquinol + NAD(+) + n H(+)(out). The catalysed reaction is a plastoquinone + NADPH + (n+1) H(+)(in) = a plastoquinol + NADP(+) + n H(+)(out). Its function is as follows. NDH shuttles electrons from NAD(P)H:plastoquinone, via FMN and iron-sulfur (Fe-S) centers, to quinones in the photosynthetic chain and possibly in a chloroplast respiratory chain. The immediate electron acceptor for the enzyme in this species is believed to be plastoquinone. Couples the redox reaction to proton translocation, and thus conserves the redox energy in a proton gradient. This Oenothera elata subsp. hookeri (Hooker's evening primrose) protein is NAD(P)H-quinone oxidoreductase subunit 5, chloroplastic (ndhF).